Reading from the N-terminus, the 285-residue chain is RING finger protein 223 (285 aa).

The RING-type zinc-finger motif lies at 81 to 132 (CSICFSGYDNIFKTPKELSCSHVFCLECLARLAAAQPAGRSGREAVPCPFCR). Residues 230 to 250 (VALVSVLLLVLFCVILWPVQC) traverse the membrane as a helical segment.

Its subcellular location is the membrane. The protein is RING finger protein 223 (Rnf223) of Mus musculus (Mouse).